The chain runs to 916 residues: Inter-alpha-trypsin inhibitor heavy chain H4 (916 aa).

The N-terminal stretch at 1 to 27 is a signal peptide; sequence MKTPAPGRIHSIVLVLLSLAVLQTSKA. The VIT domain maps to 28-149; the sequence is QKVQNDIDIY…KVTFELVYEE (122 aa). Residues Asn82 and Asn208 are each glycosylated (N-linked (GlcNAc...) asparagine). A VWFA domain is found at 275–458; the sequence is NVIFVIDKSG…LQLQDFYQEV (184 aa). Residue Asn518 is glycosylated (N-linked (GlcNAc...) asparagine). Disordered stretches follow at residues 597 to 616 and 678 to 701; these read PEGQ…ESRG and PLAP…TDFR. Low complexity predominate over residues 678-689; it reads PLAPASAPSPTS. O-linked (GalNAc...) serine glycosylation occurs at Ser683. O-linked (GalNAc...) threonine glycans are attached at residues Thr705, Thr706, and Thr708. Cys733 and Cys911 are joined by a disulfide.

Belongs to the ITIH family. As to quaternary structure, interacts (via C-terminus) with DNAJC1 (via SANT 2 domain). Post-translationally, appears to be both N- and O-glycosylated.

The protein resides in the secreted. In terms of biological role, type II acute-phase protein (APP) involved in inflammatory responses to trauma. May also play a role in liver development or regeneration. This chain is Inter-alpha-trypsin inhibitor heavy chain H4 (ITIH4), found in Bos taurus (Bovine).